We begin with the raw amino-acid sequence, 569 residues long: Dolichol kinase EVAN (569 aa).

Over 1 to 22 the chain is Cytoplasmic; sequence MKTTATSFVTGERVVVFVVVSR. Residues 23 to 43 traverse the membrane as a helical segment; sequence ILLSLPLSLISHGFSLFLLSL. Over 44-67 the chain is Lumenal; that stretch reads SAFLVEIRVETSPFLLSHFSSRRG. Residues 68 to 88 form a helical membrane-spanning segment; that stretch reads ASSGILLGAVTLPSVMISKLV. The Cytoplasmic segment spans residues 89-108; sequence QLSRAISIHEAEQDELAHVT. A helical transmembrane segment spans residues 109–129; sequence MQYWAASASCCAILIYLSVIM. At 130-147 the chain is on the lumenal side; sequence SQVRKDESLSSSSIWLTR. A helical transmembrane segment spans residues 148–168; the sequence is VSLTGTVLYGVACFVSLSMIS. Over 169-178 the chain is Cytoplasmic; the sequence is HTGLNTSLKM. Residues 179-199 form a helical membrane-spanning segment; the sequence is LWMLFHGLAAVKLIRHLLCTF. The Lumenal portion of the chain corresponds to 200-207; that stretch reads PSCASIGE. Residues 208–228 traverse the membrane as a helical segment; the sequence is ALLVTSGLVLYFGDFLACTIA. Residues 229–252 lie on the Cytoplasmic side of the membrane; that stretch reads KIFEKLIPVDLVSISYGIKRTETG. Residues 253–273 form a helical membrane-spanning segment; sequence IIVQGLLLGLLLFPMVFRFVL. The Lumenal portion of the chain corresponds to 274–296; the sequence is HIYESSLRKRDARQRNCSDAAKS. N-linked (GlcNAc...) asparagine glycosylation occurs at N289. A helical transmembrane segment spans residues 297–317; the sequence is VLFFVSLLFFMVVAVPSWMQF. The Cytoplasmic portion of the chain corresponds to 318–340; the sequence is VHDFNQHPFLWVLTFVFSEPLKR. A helical transmembrane segment spans residues 341 to 361; it reads LSLCIYWILLIVVSVSRFYNI. Over 362–369 the chain is Lumenal; sequence SRSSKVER. A helical transmembrane segment spans residues 370–390; that stretch reads ILLRKYYHLMAVLMFLPALVL. Topologically, residues 391 to 393 are cytoplasmic; the sequence is QPK. The chain crosses the membrane as a helical span at residues 394-414; it reads FLDLAFGAALAVFVALEIIRI. Residues 415-440 lie on the Lumenal side of the membrane; the sequence is WRIQPLGEPLHQFMNAFTDHRDSEHL. A helical membrane pass occupies residues 441-461; the sequence is IVSHFSLLLGCALPIWMSSGF. At 462-464 the chain is on the cytoplasmic side; sequence NDR. Residues 465 to 485 traverse the membrane as a helical segment; the sequence is ALSPFAGILSLGIGDTMASMV. The Lumenal segment spans residues 486 to 508; that stretch reads GHKYGVLRWSKTGKKTVEGTAAG. A CTP-binding region spans residues 487 to 503; the sequence is HKYGVLRWSKTGKKTVE. The chain crosses the membrane as a helical span at residues 509-529; the sequence is ITSMMAVCFVLVPILASMGYI. At 530 to 548 the chain is on the cytoplasmic side; sequence LSQGWWSLLVAVTATGMLE. The chain crosses the membrane as a helical span at residues 549 to 569; it reads AYTAQLDNAFIPLVFYSLLCL.

It belongs to the polyprenol kinase family.

It is found in the endoplasmic reticulum membrane. The enzyme catalyses a di-trans,poly-cis-dolichol + CTP = a di-trans,poly-cis-dolichyl phosphate + CDP + H(+). Essential for pollen development. Involved in protein N-glycosylation in the endoplasmic reticulum (ER), especially in the female gametophyte. Mediates pollen tube (PT) reception in synergids through protein glycosylation. The protein is Dolichol kinase EVAN of Arabidopsis thaliana (Mouse-ear cress).